Consider the following 137-residue polypeptide: Probable 4-amino-4-deoxy-L-arabinose-phosphoundecaprenol flippase subunit ArnF (137 aa).

Residues 1–5 (MNVPR) lie on the Cytoplasmic side of the membrane. The helical transmembrane segment at 6–26 (GWLAALGSVLLVSAAQLGMRW) threads the bilayer. The Periplasmic segment spans residues 27–44 (GMSRLPLPEAWAGQTPEH). The helical transmembrane segment at 45–65 (AALLAVALAVAAYAASLLCWL) threads the bilayer. Residues 66 to 76 (AALRHLPLGRA) are Cytoplasmic-facing. The helical transmembrane segment at 77–97 (YSLLSASYALVYLLAASLPAF) threads the bilayer. Residues 98–100 (EET) are Periplasmic-facing. Residues 101–121 (FTTGKTLGVGLVVLGVLTVNA) form a helical membrane-spanning segment. The Cytoplasmic segment spans residues 122 to 137 (RRTAAAPAHHPSRKAL).

Belongs to the ArnF family. As to quaternary structure, heterodimer of ArnE and ArnF.

It localises to the cell inner membrane. It functions in the pathway bacterial outer membrane biogenesis; lipopolysaccharide biosynthesis. Its function is as follows. Translocates 4-amino-4-deoxy-L-arabinose-phosphoundecaprenol (alpha-L-Ara4N-phosphoundecaprenol) from the cytoplasmic to the periplasmic side of the inner membrane. This is Probable 4-amino-4-deoxy-L-arabinose-phosphoundecaprenol flippase subunit ArnF from Pseudomonas paraeruginosa (strain DSM 24068 / PA7) (Pseudomonas aeruginosa (strain PA7)).